A 410-amino-acid chain; its full sequence is MNTEFIFADRQLSLIRYPEKHQHVSLQAWDSADELVIEHLESLLSENELSIGDNESTPSLMIFNDDFGALGCWFSHLAPYWVSDSYISLRSLHENLKANSLIRASEGSCTQELKTSPVKTLTSVESASFKPACAPAVVVIKVPRALALLEQQLIDLQAYITPETQVIATGKVKAITKSALNLFEKYIGPTTTSLAKKKSRLIFATPRDSLKQATSPYPTRWQCKSTMGAALIIDNLANTFARQSLDIGARIMLEHMTVSANDVVVDLGCGNGVLGVNALSLAPDAKVIFVDESYMALESARLNVLNNFPDKIEQCEFVASNCLETLLNRENKPAVTKILCNPPFHQQNAITDHIAWQMFTDSRDLLVKSGHLVVVGNRHLEYHIKLKKLFGGAKVLASDKKFVILGTAKR.

Belongs to the methyltransferase superfamily. RlmG family.

Its subcellular location is the cytoplasm. The catalysed reaction is guanosine(1835) in 23S rRNA + S-adenosyl-L-methionine = N(2)-methylguanosine(1835) in 23S rRNA + S-adenosyl-L-homocysteine + H(+). Functionally, specifically methylates the guanine in position 1835 (m2G1835) of 23S rRNA. The sequence is that of Ribosomal RNA large subunit methyltransferase G from Alteromonas mediterranea (strain DSM 17117 / CIP 110805 / LMG 28347 / Deep ecotype).